Reading from the N-terminus, the 190-residue chain is MILLIDNYDSFTYNLAQYLSELNIKVLVKRNDKITLDEIKNLNIQGIIISPCPGGPEDSGISQGIIKYLGNQIPILGVCLGHQTIGHVFGGKIIKAPKLIHGKPSIIFHDGKGVFQNLKNPITATRYHSLIIEKESCPDELEITAWTEDGLIMGIQHKKYKQLQGIQFHPESILTESGKQILQNFINCLN.

The region spanning 1-190 is the Glutamine amidotransferase type-1 domain; sequence MILLIDNYDS…ILQNFINCLN (190 aa). 52 to 54 is a binding site for L-glutamine; sequence CPG. Residue Cys79 is the Nucleophile; for GATase activity of the active site. L-glutamine-binding positions include Gln83 and 129 to 130; that span reads SL. Residues His169 and Glu171 contribute to the active site.

Tetramer of two components I and two components II.

It localises to the plastid. Its subcellular location is the cyanelle. The catalysed reaction is chorismate + L-glutamine = anthranilate + pyruvate + L-glutamate + H(+). It functions in the pathway amino-acid biosynthesis; L-tryptophan biosynthesis; L-tryptophan from chorismate: step 1/5. The protein is Anthranilate synthase component 2 (trpG) of Cyanophora paradoxa.